The following is a 393-amino-acid chain: Phosphoglycerate kinase (393 aa).

Substrate-binding positions include 21 to 23 (DFN), R37, 60 to 63 (HLGR), R119, and R152. ATP is bound by residues K202, E323, and 349–352 (GGDT).

Belongs to the phosphoglycerate kinase family. In terms of assembly, monomer.

The protein resides in the cytoplasm. It catalyses the reaction (2R)-3-phosphoglycerate + ATP = (2R)-3-phospho-glyceroyl phosphate + ADP. It participates in carbohydrate degradation; glycolysis; pyruvate from D-glyceraldehyde 3-phosphate: step 2/5. In Desulforudis audaxviator (strain MP104C), this protein is Phosphoglycerate kinase.